Here is a 329-residue protein sequence, read N- to C-terminus: Putative oligopeptide transport ATP-binding protein YkfD (329 aa).

Residues 7–252 (LEVSQLKMHF…PLHPYTKALL (246 aa)) form the ABC transporter domain. 44–51 (GESGCGKS) contacts ATP.

The protein belongs to the ABC transporter superfamily.

The polypeptide is Putative oligopeptide transport ATP-binding protein YkfD (ykfD) (Bacillus subtilis (strain 168)).